The chain runs to 88 residues: Elongation factor 1-beta (88 aa).

This sequence belongs to the EF-1-beta/EF-1-delta family.

In terms of biological role, promotes the exchange of GDP for GTP in EF-1-alpha/GDP, thus allowing the regeneration of EF-1-alpha/GTP that could then be used to form the ternary complex EF-1-alpha/GTP/AAtRNA. The sequence is that of Elongation factor 1-beta from Methanosphaera stadtmanae (strain ATCC 43021 / DSM 3091 / JCM 11832 / MCB-3).